A 431-amino-acid polypeptide reads, in one-letter code: DNA polymerase delta subunit 3 (431 aa).

A necessary for function, possibly resulting from its inability to interact with PolD2 region spans residues 64–80 (QGSDSGEDLYSVVLESR). Residues 128–431 (PGAGKIVPSA…AGIMNFFSKK (304 aa)) are disordered. Low complexity predominate over residues 156–171 (SKSAVKLEPSKSSLKS). Composition is skewed to basic and acidic residues over residues 172–200 (EPAK…EQAS) and 252–271 (SPPE…NKKE). The span at 278–290 (PSPTKKPTTANTS) shows a compositional bias: low complexity. The segment covering 294–307 (FDEESAESSDEEEK) has biased composition (acidic residues). 2 stretches are compositionally biased toward basic and acidic residues: residues 308–328 (LDML…EKAS) and 343–362 (QPPK…KMDT). Low complexity predominate over residues 387-411 (PANKKVSPKAAAPVNKKKSPPSAAK).

As to quaternary structure, component of both the DNA polymerase delta and DNA polymerase zeta complexes. The DNA polymerase delta complex consists of three subunits: the catalytic subunit PolD1 and two accessory subunits PolD2/Pol31 and PolD3/Pol32. Within the delta complex, interacts with both PolD1 and PolD2. Component of the DNA polymerase zeta complex consisting of four subunits: the catalytic subunit PolZ1 and three accessory subunits PolZ2/Rev7, PolD2/Pol31 and PolD3/Pol32. As to expression, expressed in ovaries (at the protein level). Expressed in ovaries.

It localises to the nucleus. Its subcellular location is the nucleoplasm. In terms of biological role, accessory component of the DNA polymerase delta complex and possibly the DNA polymerase zeta complex. As a component of the delta complex, participates in high fidelity genome replication, including lagging strand synthesis, DNA recombination and repair. Required to recruit the DNA polymerase delta complex to the nucleus of rapidly dividing embryonic cells, and as a consequence is essential for genome replication during the earliest cell cycles. Increases the efficiency and processivity of DNA synthesis of the DNA polymerases during mitotic DNA replication and repair. During development this function is essential for preventing replication stress that results in the formation of chromosomal fragile sites (CFS) such as chromosomal breaks. Ensures genomic stability by promoting several types of DNA repair mechanisms including repairing broken dicentric chromosomes through homolog-dependent break-induced replication (BIR). During homologous recombination (HR) repair, required for maintaining the processivity of the delta complex during break-induced replication; a form of HR that requires extensive DNA synthesis such as the repair of large gaps. Able to suppress position effect variegation and may therefore have a role in the induction of chromatin state changes that likely include its activities in DNA replication and repair. The sequence is that of DNA polymerase delta subunit 3 from Drosophila melanogaster (Fruit fly).